The sequence spans 312 residues: Apolipoprotein E (312 aa).

The first 18 residues, 1–18 (MKALWALLLVPLLTGCLA), serve as a signal peptide directing secretion. 8 repeat units span residues 72–93 (VLMEDTMTEVKAYKKELEEQLG), 94–115 (PVAEETRARLAKEVQAAQARLG), 116–137 (ADMEDLRNRLGQYRNEVNTMLG), 138–159 (QSTEELRSRLSTHLRKMRKRLM), 160–181 (RDADDLQKRLAVYKAGAQEGAE), 182–203 (RGVSAIRERLGPLVEQGRQRTA), 204–225 (NLGSGAAQPLRDRAQALSDRIR), and 226–247 (GRLEEVGNQARDRLEEVRDQME). The tract at residues 72 to 247 (VLMEDTMTEV…RLEEVRDQME (176 aa)) is 8 X 22 AA approximate tandem repeats. At Met135 the chain carries Methionine sulfoxide. Ser139 is modified (phosphoserine). An LDL and other lipoprotein receptors binding region spans residues 150-160 (HLRKMRKRLMR). The tract at residues 150 to 160 (HLRKMRKRLMR) is LDL receptor binding. 154–157 (MRKR) provides a ligand contact to heparin. The interval 202-282 (TANLGSGAAQ…GWFEPLVEDM (81 aa)) is lipid-binding and lipoprotein association. Residue 221–228 (SDRIRGRL) coordinates heparin. A homooligomerization region spans residues 258–312 (QQIRLQAEVFQARLKGWFEPLVEDMQRQWANLMEKIQASVATNSIASTTVPLENQ). Positions 270–282 (RLKGWFEPLVEDM) are specificity for association with VLDL.

This sequence belongs to the apolipoprotein A1/A4/E family. Homotetramer. May interact with ABCA1; functionally associated with ABCA1 in the biogenesis of HDLs. May interact with APP/A4 amyloid-beta peptide; the interaction is extremely stable in vitro but its physiological significance is unclear. May interact with MAPT. May interact with MAP2. In the cerebrospinal fluid, interacts with secreted SORL1. Interacts with PMEL; this allows the loading of PMEL luminal fragment on ILVs to induce fibril nucleation. APOE exists as multiple glycosylated and sialylated glycoforms within cells and in plasma. The extent of glycosylation and sialylation are tissue and context specific. Post-translationally, glycated in plasma VLDL. In terms of processing, phosphorylated by FAM20C in the extracellular medium.

It localises to the secreted. Its subcellular location is the extracellular space. The protein resides in the extracellular matrix. The protein localises to the extracellular vesicle. It is found in the endosome. It localises to the multivesicular body. Functionally, APOE is an apolipoprotein, a protein associating with lipid particles, that mainly functions in lipoprotein-mediated lipid transport between organs via the plasma and interstitial fluids. APOE is a core component of plasma lipoproteins and is involved in their production, conversion and clearance. Apolipoproteins are amphipathic molecules that interact both with lipids of the lipoprotein particle core and the aqueous environment of the plasma. As such, APOE associates with chylomicrons, chylomicron remnants, very low density lipoproteins (VLDL) and intermediate density lipoproteins (IDL) but shows a preferential binding to high-density lipoproteins (HDL). It also binds a wide range of cellular receptors including the LDL receptor/LDLR, the LDL receptor-related proteins LRP1, LRP2 and LRP8 and the very low-density lipoprotein receptor/VLDLR that mediate the cellular uptake of the APOE-containing lipoprotein particles. Finally, APOE also has a heparin-binding activity and binds heparan-sulfate proteoglycans on the surface of cells, a property that supports the capture and the receptor-mediated uptake of APOE-containing lipoproteins by cells. A main function of APOE is to mediate lipoprotein clearance through the uptake of chylomicrons, VLDLs, and HDLs by hepatocytes. APOE is also involved in the biosynthesis by the liver of VLDLs as well as their uptake by peripheral tissues ensuring the delivery of triglycerides and energy storage in muscle, heart and adipose tissues. By participating in the lipoprotein-mediated distribution of lipids among tissues, APOE plays a critical role in plasma and tissues lipid homeostasis. APOE is also involved in two steps of reverse cholesterol transport, the HDLs-mediated transport of cholesterol from peripheral tissues to the liver, and thereby plays an important role in cholesterol homeostasis. First, it is functionally associated with ABCA1 in the biogenesis of HDLs in tissues. Second, it is enriched in circulating HDLs and mediates their uptake by hepatocytes. APOE also plays an important role in lipid transport in the central nervous system, regulating neuron survival and sprouting. In Rattus rattus (Black rat), this protein is Apolipoprotein E (Apoe).